Consider the following 130-residue polypeptide: Glycine cleavage system H protein (130 aa).

A Lipoyl-binding domain is found at 25–106 (MALIGISDFA…PFDSWMIKVK (82 aa)). The residue at position 66 (K66) is an N6-lipoyllysine.

The protein belongs to the GcvH family. In terms of assembly, the glycine cleavage system is composed of four proteins: P, T, L and H. Requires (R)-lipoate as cofactor.

Functionally, the glycine cleavage system catalyzes the degradation of glycine. The H protein shuttles the methylamine group of glycine from the P protein to the T protein. The polypeptide is Glycine cleavage system H protein (Leptospira interrogans serogroup Icterohaemorrhagiae serovar copenhageni (strain Fiocruz L1-130)).